The chain runs to 256 residues: Ribosomal RNA small subunit methyltransferase A (256 aa).

Positions 12, 14, 39, 60, 81, and 103 each coordinate S-adenosyl-L-methionine.

It belongs to the class I-like SAM-binding methyltransferase superfamily. rRNA adenine N(6)-methyltransferase family. RsmA subfamily.

It localises to the cytoplasm. The enzyme catalyses adenosine(1518)/adenosine(1519) in 16S rRNA + 4 S-adenosyl-L-methionine = N(6)-dimethyladenosine(1518)/N(6)-dimethyladenosine(1519) in 16S rRNA + 4 S-adenosyl-L-homocysteine + 4 H(+). Its function is as follows. Specifically dimethylates two adjacent adenosines (A1518 and A1519) in the loop of a conserved hairpin near the 3'-end of 16S rRNA in the 30S particle. May play a critical role in biogenesis of 30S subunits. This chain is Ribosomal RNA small subunit methyltransferase A, found in Methylibium petroleiphilum (strain ATCC BAA-1232 / LMG 22953 / PM1).